The sequence spans 271 residues: MWIDCRTIARSIEERTKERVEKLGFTPKLVSVACTDDPSALSYLKSQRKKAEKLGIAFEILNVSPEEIVSTLKKLGSDESVNGVFVARPFPPSFDEKEILSSVPVEKDVEGVNPANLGLLLYDEEIFPPCTAEAAVRILERETNLSGKRVTVVGRSVTVGKPLALMLLKKGRDATVTVCHSRTVNLEEITKNSDIVVVAVGRAHFLKKNMVKEGAIVIDVGINYVDGKLQGDVDPSVEEIARVTPVPGGVGQVTTALLFEHVVRAAERQRK.

NADP(+) is bound by residues Gly154 to Ser156, Ser181, and Ile222.

This sequence belongs to the tetrahydrofolate dehydrogenase/cyclohydrolase family. In terms of assembly, homodimer.

The catalysed reaction is (6R)-5,10-methylene-5,6,7,8-tetrahydrofolate + NADP(+) = (6R)-5,10-methenyltetrahydrofolate + NADPH. The enzyme catalyses (6R)-5,10-methenyltetrahydrofolate + H2O = (6R)-10-formyltetrahydrofolate + H(+). It participates in one-carbon metabolism; tetrahydrofolate interconversion. Catalyzes the oxidation of 5,10-methylenetetrahydrofolate to 5,10-methenyltetrahydrofolate and then the hydrolysis of 5,10-methenyltetrahydrofolate to 10-formyltetrahydrofolate. This Thermotoga sp. (strain RQ2) protein is Bifunctional protein FolD.